A 327-amino-acid polypeptide reads, in one-letter code: E3 ubiquitin-protein ligase SINAT4 (327 aa).

The disordered stretch occupies residues 1–27 (METDSMECVSSTGNEIHQNGNGHQSYQ). Polar residues predominate over residues 8 to 27 (CVSSTGNEIHQNGNGHQSYQ). The segment at 64–100 (CPVCTYSMYPPIHQCHNGHTLCSTCKVRVHNRCPTCR) adopts an RING-type zinc-finger fold. The interval 114–307 (VAESLELPCK…KELKLRVTGK (194 aa)) is SBD. Residues 117–177 (SLELPCKFYN…LVAHLRDDHK (61 aa)) form an SIAH-type zinc finger. Zn(2+) is bound by residues Cys122, Cys129, His141, Cys145, Cys152, Cys159, His171, and His176.

Belongs to the SINA (Seven in absentia) family. As to quaternary structure, interacts with SINAT6. Interacts with WAV3. Interacts with FREE1. Interacts with ELC/VPS23A.

The protein resides in the endosome. It is found in the multivesicular body. Its subcellular location is the cytoplasmic vesicle. It localises to the autophagosome. The catalysed reaction is S-ubiquitinyl-[E2 ubiquitin-conjugating enzyme]-L-cysteine + [acceptor protein]-L-lysine = [E2 ubiquitin-conjugating enzyme]-L-cysteine + N(6)-ubiquitinyl-[acceptor protein]-L-lysine.. It participates in protein modification; protein ubiquitination. E3 ubiquitin-protein ligase that mediates ubiquitination and subsequent proteasomal degradation of target proteins. E3 ubiquitin ligases accept ubiquitin from an E2 ubiquitin-conjugating enzyme in the form of a thioester and then directly transfers the ubiquitin to targeted substrates. It probably triggers the ubiquitin-mediated degradation of different substrates. Modulates directly the ubiquitination and proteasomal-dependent degradation of FREE1, a component of the ESCRT-I complex. Modulates directly the ubiquitination and proteasomal-dependent degradation of ELC/VPS23A, a component of the ESCRT-I complex. The protein is E3 ubiquitin-protein ligase SINAT4 of Arabidopsis thaliana (Mouse-ear cress).